The primary structure comprises 158 residues: Ankyrin repeat domain-containing protein 37 (158 aa).

ANK repeat units lie at residues 1 to 25, 30 to 59, and 63 to 92; these read MLLLDCNPEVDSLKHLLETGASVNA, CEQSPVHLAAGGGLACFLLWQLQTGADLNQ, and FGEAPLHKAARVGSMECLSLLVASDAQIDL. A Nuclear localization signal motif is present at residues 129–149; it reads EQPNKDHCVQVLRLKRSFGSE.

In terms of processing, ubiquitinated by the CRL2(FEM1B) complex, leading to its degradation.

The protein resides in the nucleus. It localises to the cytoplasm. The polypeptide is Ankyrin repeat domain-containing protein 37 (ANKRD37) (Bos taurus (Bovine)).